The sequence spans 146 residues: UPF0310 protein YdcG (146 aa).

It belongs to the UPF0310 family.

This Bacillus subtilis (strain 168) protein is UPF0310 protein YdcG (ydcG).